We begin with the raw amino-acid sequence, 110 residues long: MAKPANKLVIVTEKILLKKIAKIIDESGAKGYTVMNTGGKGSRNVRSSGQPNTSDIEANIKFEILTETREMAEEIADRVAVKYFNDYAGIIYICSAEVLYGHTFCGPEGC.

The protein localises to the cellular thylakoid membrane. Its subcellular location is the cell membrane. The protein is Membrane-associated protein slr1513 of Synechocystis sp. (strain ATCC 27184 / PCC 6803 / Kazusa).